A 139-amino-acid chain; its full sequence is Large ribosomal subunit protein uL16 (139 aa).

The protein belongs to the universal ribosomal protein uL16 family. As to quaternary structure, part of the 50S ribosomal subunit.

Binds 23S rRNA and is also seen to make contacts with the A and possibly P site tRNAs. This is Large ribosomal subunit protein uL16 from Parvibaculum lavamentivorans (strain DS-1 / DSM 13023 / NCIMB 13966).